The primary structure comprises 241 residues: Beta-nerve growth factor (241 aa).

Positions 1–18 (MSMLFYTLITAFLIGVQA) are cleaved as a signal peptide. Positions 19 to 121 (EPYTDSNVPE…SFNRTHRSKR (103 aa)) are excised as a propeptide. N-linked (GlcNAc...) asparagine glycosylation is found at Asn69, Asn114, and Asn166. 3 cysteine pairs are disulfide-bonded: Cys136–Cys201, Cys179–Cys229, and Cys189–Cys231. A 1-acyl-sn-glycero-3-phospho-(1D-myo-inositol)-binding residues include Tyr173 and Lys209. Lys209 serves as a coordination point for a 1-acyl-sn-glycero-3-phospho-L-serine.

This sequence belongs to the NGF-beta family. As to quaternary structure, homodimer. The homodimer interacts with a single NTRK1 chain. The homodimer interacts with a single NGFR chain. The NGF dimer interacts with a single SORCS2 chain (via extracellular domain). The NGF precursor (proNGF) binds to a receptor complex formed by SORT1 and NGFR, which leads to NGF endocytosis. Both mature NGF and the immature NGF precursor (proNGF) interact with SORCS2 and with the heterodimer formed by SORCS2 and NGFR (via extracellular domains). The NGF precursor (proNGF) has much higher affinity for SORCS2 than mature NGF. The NGF precursor (proNGF) has much higher affinity for SORT1 than mature NGF. Interacts with ADAM10 in a divalent cation-dependent manner. Interacts with SORCS3. In terms of tissue distribution, detected in the granule and pyramidal cell layer in the hippocampus.

It localises to the secreted. It is found in the endosome lumen. Its function is as follows. Nerve growth factor is important for the development and maintenance of the sympathetic and sensory nervous systems. Extracellular ligand for the NTRK1 and NGFR receptors, activates cellular signaling cascades to regulate neuronal proliferation, differentiation and survival. The immature NGF precursor (proNGF) functions as a ligand for the heterodimeric receptor formed by SORCS2 and NGFR, and activates cellular signaling cascades that lead to inactivation of RAC1 and/or RAC2, reorganization of the actin cytoskeleton and neuronal growth cone collapse. In contrast to mature NGF, the precursor form (proNGF) promotes neuronal apoptosis (in vitro). Inhibits metalloproteinase-dependent proteolysis of platelet glycoprotein VI. Binds lysophosphatidylinositol and lysophosphatidylserine between the two chains of the homodimer. The lipid-bound form promotes histamine relase from mast cells, contrary to the lipid-free form. In Rattus norvegicus (Rat), this protein is Beta-nerve growth factor (Ngf).